Here is a 305-residue protein sequence, read N- to C-terminus: N-acetylmuramic acid 6-phosphate etherase (305 aa).

The SIS domain maps to 61–224; that stretch reads ISDALAKGGR…STGAMVKLGK (164 aa). Glu89 acts as the Proton donor in catalysis. Glu120 is a catalytic residue.

It belongs to the GCKR-like family. MurNAc-6-P etherase subfamily. In terms of assembly, homodimer.

The catalysed reaction is N-acetyl-D-muramate 6-phosphate + H2O = N-acetyl-D-glucosamine 6-phosphate + (R)-lactate. It functions in the pathway amino-sugar metabolism; N-acetylmuramate degradation. Its function is as follows. Specifically catalyzes the cleavage of the D-lactyl ether substituent of MurNAc 6-phosphate, producing GlcNAc 6-phosphate and D-lactate. The chain is N-acetylmuramic acid 6-phosphate etherase from Synechocystis sp. (strain ATCC 27184 / PCC 6803 / Kazusa).